Here is a 626-residue protein sequence, read N- to C-terminus: Threonine--tRNA ligase (626 aa).

Positions 1–145 (MRMLLIHSDY…SRTIVPEKAV (145 aa)) are editing domain. The segment at 207-506 (PHVRLMLEQE…QEKGIKPMYP (300 aa)) is catalytic. Positions 299, 351, and 475 each coordinate Zn(2+).

Belongs to the class-II aminoacyl-tRNA synthetase family. As to quaternary structure, homodimer. Zn(2+) serves as cofactor.

It localises to the cytoplasm. It carries out the reaction tRNA(Thr) + L-threonine + ATP = L-threonyl-tRNA(Thr) + AMP + diphosphate + H(+). In terms of biological role, catalyzes the attachment of threonine to tRNA(Thr) in a two-step reaction: L-threonine is first activated by ATP to form Thr-AMP and then transferred to the acceptor end of tRNA(Thr). Also edits incorrectly charged L-seryl-tRNA(Thr). The polypeptide is Threonine--tRNA ligase (Thermococcus kodakarensis (strain ATCC BAA-918 / JCM 12380 / KOD1) (Pyrococcus kodakaraensis (strain KOD1))).